The sequence spans 510 residues: Inositol-3-phosphate synthase isozyme 2 (510 aa).

The protein belongs to the myo-inositol 1-phosphate synthase family. NAD(+) is required as a cofactor. Expressed in siliques, leaves, roots, seed endosperm, but not in embryos. Highest expression in seeds. In leaves, only expressed in hydathodes and vascular tissue.

The protein localises to the cytoplasm. The catalysed reaction is D-glucose 6-phosphate = 1D-myo-inositol 3-phosphate. The protein operates within polyol metabolism; myo-inositol biosynthesis; myo-inositol from D-glucose 6-phosphate: step 1/2. In terms of biological role, key enzyme in myo-inositol biosynthesis pathway that catalyzes the conversion of glucose 6-phosphate to 1-myo-inositol 1-phosphate in a NAD-dependent manner. This chain is Inositol-3-phosphate synthase isozyme 2 (IPS2), found in Arabidopsis thaliana (Mouse-ear cress).